The sequence spans 465 residues: Probable glucan endo-1,3-beta-glucosidase eglC (465 aa).

A signal peptide spans 1–19 (MFTKTQILALALSIASAEA). The active-site Proton donor is Glu128. Asn183 is a glycosylation site (N-linked (GlcNAc...) asparagine). Catalysis depends on Glu239, which acts as the Nucleophile. An N-linked (GlcNAc...) asparagine glycan is attached at Asn318. 2 stretches are compositionally biased toward low complexity: residues 320–333 (SSAS…SAQS) and 380–438 (SPSA…ATPA). Disordered stretches follow at residues 320–356 (SSAS…GHGG) and 380–440 (SPSA…PADF). A lipid anchor (GPI-anchor amidated glycine) is attached at Gly442. The propeptide at 443–465 (AGSRLSGSIFGAAMLVAALAVAL) is removed in mature form.

Belongs to the glycosyl hydrolase 17 family. The GPI-anchor is attached to the protein in the endoplasmic reticulum and serves to target the protein to the cell surface. There, the glucosamine-inositol phospholipid moiety is cleaved off and the GPI-modified mannoprotein is covalently attached via its lipidless GPI glycan remnant to the 1,6-beta-glucan of the outer cell wall layer.

Its subcellular location is the cell membrane. It is found in the secreted. The protein localises to the cell wall. It carries out the reaction Hydrolysis of (1-&gt;3)-beta-D-glucosidic linkages in (1-&gt;3)-beta-D-glucans.. Its function is as follows. Glucanases play a role in cell expansion during growth, in cell-cell fusion during mating, and in spore release during sporulation. This enzyme may be involved in beta-glucan degradation and also function biosynthetically as a transglycosylase. This Emericella nidulans (strain FGSC A4 / ATCC 38163 / CBS 112.46 / NRRL 194 / M139) (Aspergillus nidulans) protein is Probable glucan endo-1,3-beta-glucosidase eglC (eglC).